A 114-amino-acid polypeptide reads, in one-letter code: Iron-sulfur cluster insertion protein ErpA (114 aa).

Positions 42, 106, and 108 each coordinate iron-sulfur cluster.

This sequence belongs to the HesB/IscA family. As to quaternary structure, homodimer. The cofactor is iron-sulfur cluster.

Its function is as follows. Required for insertion of 4Fe-4S clusters for at least IspG. In Salmonella typhi, this protein is Iron-sulfur cluster insertion protein ErpA.